The sequence spans 507 residues: MFS-type transporter acdC (507 aa).

The segment at 1 to 50 is disordered; the sequence is MSPNAPAVDIGAAPSLDTPEGDTKQPAEDHVEKDSNLVDWDGPDDPEHPQ. Positions 21–36 are enriched in basic and acidic residues; it reads GDTKQPAEDHVEKDSN. N-linked (GlcNAc...) asparagine glycosylation occurs at Asn51. The helical transmembrane segment at 58-78 threads the bilayer; it reads WGITFSLASMTMWITFSSSVL. Residue Asn90 is glycosylated (N-linked (GlcNAc...) asparagine). 5 helical membrane passes run 95-115, 125-145, 155-175, 186-206, and 215-235; these read VMPLATTLVIFGFALGPLCWA, LPTFLGYGVFAIFQVPVAVAP, FFVGVFGSSALSVGPGVMADI, PFFFAANLLGPILGPIIGGFI, and WTAWLTLITSIFFGVLALLIV. A glycan (N-linked (GlcNAc...) asparagine) is linked at Asn257. The next 6 membrane-spanning stretches (helical) occupy residues 290–310, 328–348, 371–391, 395–415, 442–462, and 466–486; these read PILICFTVYLSLIYGILYLFL, IAGLPFLGILVGMVLGIGIII, LVEMMLTSITMPIGLFWFGWA, HWMVQTIAGVPLGIGLFVLFM, FLGGSFPLFATAMYHNLGVDW, and ILGFISVAMVPIPFAFYIFGA.

It belongs to the major facilitator superfamily. CAR1 family.

It localises to the membrane. Its function is as follows. MFS-type transporter; part of the gene cluster that mediates the biosynthesis of aspcandine, a pyrrolobenzazepine alkaloid. The protein is MFS-type transporter acdC of Aspergillus candidus.